The following is a 362-amino-acid chain: tRNA-specific 2-thiouridylase MnmA 3 (362 aa).

ATP is bound by residues 11–18 and M37; that span reads GMSGGIDS. The active-site Nucleophile is the C91. C91 and C188 are oxidised to a cystine. G115 is an ATP binding site. Residues 137 to 139 form an interaction with tRNA region; sequence KDQ. The Cysteine persulfide intermediate role is filled by C188. The interaction with tRNA stretch occupies residues 296 to 297; it reads RY.

It belongs to the MnmA/TRMU family.

Its subcellular location is the cytoplasm. The catalysed reaction is S-sulfanyl-L-cysteinyl-[protein] + uridine(34) in tRNA + AH2 + ATP = 2-thiouridine(34) in tRNA + L-cysteinyl-[protein] + A + AMP + diphosphate + H(+). Functionally, catalyzes the 2-thiolation of uridine at the wobble position (U34) of tRNA, leading to the formation of s(2)U34. The chain is tRNA-specific 2-thiouridylase MnmA 3 from Bacteroides fragilis (strain YCH46).